Consider the following 81-residue polypeptide: ATP synthase subunit c, chloroplastic (81 aa).

A run of 2 helical transmembrane segments spans residues 3–23 and 57–77; these read PLIA…ASIG and LAFM…LLFA.

Belongs to the ATPase C chain family. As to quaternary structure, F-type ATPases have 2 components, F(1) - the catalytic core - and F(0) - the membrane proton channel. F(1) has five subunits: alpha(3), beta(3), gamma(1), delta(1), epsilon(1). F(0) has four main subunits: a(1), b(1), b'(1) and c(10-14). The alpha and beta chains form an alternating ring which encloses part of the gamma chain. F(1) is attached to F(0) by a central stalk formed by the gamma and epsilon chains, while a peripheral stalk is formed by the delta, b and b' chains.

It is found in the plastid. Its subcellular location is the chloroplast thylakoid membrane. Its function is as follows. F(1)F(0) ATP synthase produces ATP from ADP in the presence of a proton or sodium gradient. F-type ATPases consist of two structural domains, F(1) containing the extramembraneous catalytic core and F(0) containing the membrane proton channel, linked together by a central stalk and a peripheral stalk. During catalysis, ATP synthesis in the catalytic domain of F(1) is coupled via a rotary mechanism of the central stalk subunits to proton translocation. Functionally, key component of the F(0) channel; it plays a direct role in translocation across the membrane. A homomeric c-ring of between 10-14 subunits forms the central stalk rotor element with the F(1) delta and epsilon subunits. This is ATP synthase subunit c, chloroplastic from Agrostis stolonifera (Creeping bentgrass).